The chain runs to 198 residues: Ribosome maturation factor RimP (198 aa).

It belongs to the RimP family.

The protein localises to the cytoplasm. Functionally, required for maturation of 30S ribosomal subunits. In Rhizobium rhizogenes (strain K84 / ATCC BAA-868) (Agrobacterium radiobacter), this protein is Ribosome maturation factor RimP.